Consider the following 98-residue polypeptide: Large ribosomal subunit protein uL23 (98 aa).

It belongs to the universal ribosomal protein uL23 family. In terms of assembly, part of the 50S ribosomal subunit. Contacts protein L29, and trigger factor when it is bound to the ribosome.

In terms of biological role, one of the early assembly proteins it binds 23S rRNA. One of the proteins that surrounds the polypeptide exit tunnel on the outside of the ribosome. Forms the main docking site for trigger factor binding to the ribosome. The protein is Large ribosomal subunit protein uL23 of Streptococcus gordonii (strain Challis / ATCC 35105 / BCRC 15272 / CH1 / DL1 / V288).